The sequence spans 643 residues: Hepatoma-derived growth factor-related protein 2 (643 aa).

One can recognise a PWWP domain in the interval 7–64 (PGDLVFAKMKGYPHWPARIDDVKDGAVKPPPNKYPIFFYGTHETAFLAPKDLFPYEKC). 2 disordered regions span residues 88 to 450 (PQAS…KKPE) and 548 to 643 (LESQ…NQTS). A compositionally biased stretch (low complexity) spans 90–104 (ASYSLPPASVSSSDS). Residues 107-116 (PEEKSTARSD) show a composition bias toward basic and acidic residues. A compositionally biased stretch (acidic residues) spans 176-187 (SEEENSDSDQDF). The span at 194–204 (PRIQRRTTNLG) shows a compositional bias: polar residues. Over residues 209–231 (IFAESDSKSDESEDEKKEEEQKK) the composition is skewed to basic and acidic residues. Residues 232-249 (SPSSSSASSPSLSSSDSE) show a composition bias toward low complexity. Basic and acidic residues-rich tracts occupy residues 290-353 (SVDR…DSSK), 373-382 (EDKKPVKEVK), and 417-450 (RPSESARKTNQKEKRGERPRGRPSKVEKEKKKPE). Residues 295 to 345 (SEWKKRDEERRRELEERRKKEQEEQLRRLREEEREEEERKKREKAEKGDKS) adopt a coiled-coil conformation. The segment covering 549-559 (ESQQKTVQKVN) has biased composition (polar residues). Basic and acidic residues-rich tracts occupy residues 560-575 (TAEKDPEEEKQTGKVE) and 608-622 (NKTEMETKQNNHAEH).

It belongs to the HDGF family.

The protein localises to the nucleus. It is found in the cytoplasm. Functionally, may act as a regulator of myogenesis. Promotes the repair of DNA double-strand breaks (DSBs) through the homologous recombination pathway by facilitating the recruitment of the DNA endonuclease RBBP8 to the DSBs. The polypeptide is Hepatoma-derived growth factor-related protein 2 (hdgfl2) (Xenopus tropicalis (Western clawed frog)).